A 1529-amino-acid chain; its full sequence is ATP-dependent permease PDR15 (1529 aa).

Residues 1–13 (MSSDIRDVEERNS) show a composition bias toward basic and acidic residues. Residues 1-38 (MSSDIRDVEERNSRSSSSSSSSNSAAQSIGQHPYRGFD) are disordered. The Cytoplasmic portion of the chain corresponds to 1–531 (MSSDIRDVEE…NFWRMKQSAS (531 aa)). Residues 14 to 24 (RSSSSSSSSNS) show a composition bias toward low complexity. Residues 171-420 (LRLLKPSKEE…FQDMGYYCPP (250 aa)) form the ABC transporter 1 domain. The helical transmembrane segment at 532–552 (VTLWQVIGNSVMAFILGSMFY) threads the bilayer. Residues 553–567 (KVMKKNDTSTFYFRG) are Extracellular-facing. The N-linked (GlcNAc...) asparagine glycan is linked to N558. Residues 568–588 (AAMFFAILFNAFSCLLEIFSL) traverse the membrane as a helical segment. Topologically, residues 589-617 (YETRPITEKHRTYSLYHPSADAFASVLSE) are cytoplasmic. The helical transmembrane segment at 618–638 (MPPKLITAVCFNIIFYFLVDF) threads the bilayer. At 639–642 (RRNG) the chain is on the extracellular side. Residues 643–663 (GVFFFYFLINVIATFTLSHLF) traverse the membrane as a helical segment. Topologically, residues 664–699 (RCVGSLTKTLQEAMVPASMLLLAISMYTGFAIPKTK) are cytoplasmic. Residues 700–720 (ILGWSIWIWYINPLAYLFESL) traverse the membrane as a helical segment. At 721–783 (MINEFHDRRF…YDYEHKHKWR (63 aa)) the chain is on the extracellular side. A glycan (N-linked (GlcNAc...) asparagine) is linked at N744. The chain crosses the membrane as a helical span at residues 784 to 804 (GFGIGMAYVVFFFFVYLILCE). Residues 805-1219 (YNEGAKQKGE…LFQQYWRSPD (415 aa)) are Cytoplasmic-facing. Residues 829-840 (EGKLQEKHRPGD) are compositionally biased toward basic and acidic residues. Positions 829–873 (EGKLQEKHRPGDIENNAGSSPDSATTEKKILDDSSEGSDSSSDNA) are disordered. An ABC transporter 2 domain is found at 884–1127 (FHWRDLCYDV…MIDYFESKGA (244 aa)). 920-927 (GASGAGKT) serves as a coordination point for ATP. The chain crosses the membrane as a helical span at residues 1220-1240 (YLWSKFILTIFNQVFIGFTFF). At 1241 to 1312 (KADRSLQGLQ…VEIPWNILAG (72 aa)) the chain is on the extracellular side. Residues 1313-1333 (TIAYCIYYYAVGFYANASAAG) traverse the membrane as a helical segment. At 1334–1340 (QLHERGA) the chain is on the cytoplasmic side. The chain crosses the membrane as a helical span at residues 1341–1361 (LFWLFSIAFYVYIGSMGLLMI). Over 1362–1368 (SFNEVAE) the chain is Extracellular. Residues 1369 to 1389 (TAAHMGTLLFTMALSFCGVMA) traverse the membrane as a helical segment. At 1390 to 1396 (TPKVMPR) the chain is on the cytoplasmic side. The helical transmembrane segment at 1397 to 1417 (FWIFMYRVSPLTYMIDALLAL) threads the bilayer. Over 1418–1492 (GVANVDVKCS…SSHYYRRWRN (75 aa)) the chain is Extracellular. Residues 1493–1513 (YGIFICYIAFDYIAATFLYWL) traverse the membrane as a helical segment. At 1514–1529 (SRVPKKNGKISEKPKK) the chain is on the cytoplasmic side.

It belongs to the ABC transporter superfamily. ABCG family. PDR (TC 3.A.1.205) subfamily.

It localises to the membrane. The polypeptide is ATP-dependent permease PDR15 (PDR15) (Saccharomyces cerevisiae (strain ATCC 204508 / S288c) (Baker's yeast)).